Consider the following 648-residue polypeptide: RAF proto-oncogene serine/threonine-protein kinase (648 aa).

Ser-29 carries the phosphoserine; by MAPK1 modification. The residue at position 43 (Ser-43) is a Phosphoserine; by PKA and MAPK1. In terms of domain architecture, RBD spans 56–131 (NTIRVFLPNK…IGEELQVDFL (76 aa)). The segment at 138 to 184 (THNFARKTFLKLAFCDICQKFLLNGFRCQTCGYKFHEHCSTKVPTMC) adopts a Phorbol-ester/DAG-type zinc-finger fold. Zn(2+)-binding residues include His-139, Cys-152, Cys-155, Cys-165, Cys-168, His-173, Cys-176, and Cys-184. The disordered stretch occupies residues 220-334 (SVSRMPVSSQ…QEKNKIRPRG (115 aa)). Polar residues predominate over residues 239–271 (TFNTSSPSSEGSLSQRQRSTSTPNVHMVSTTLP). Position 252 is a phosphoserine (Ser-252). The residue at position 259 (Ser-259) is a Phosphoserine; by PKA, PKC and PKB/AKT1. The residue at position 268 (Thr-268) is a Phosphothreonine; by autocatalysis. The residue at position 269 (Thr-269) is a Phosphothreonine; by PKA. Over residues 275–285 (RMIEDAIRSHS) the composition is skewed to basic and acidic residues. Positions 286–301 (ESASPSALSSSPNNLS) are enriched in low complexity. At Ser-289 the chain carries Phosphoserine; by MAPK1. Position 296 is a phosphoserine (Ser-296). Ser-301 bears the Phosphoserine; by MAPK1 mark. Positions 331-349 (RPRGQRDSSYYWEIEASEV) are interaction with PEBP1/RKIP. Ser-338 is subject to Phosphoserine; by PAK1, PAK2, PAK3 and PAK5. Ser-339 carries the phosphoserine; by PAK1, PAK2 and PAK3 modification. Phosphotyrosine; by SRC is present on residues Tyr-340 and Tyr-341. One can recognise a Protein kinase domain in the interval 349–609 (VMLSTRIGSG…PQILSSIELL (261 aa)). ATP-binding positions include 355 to 363 (IGSGSFGTV) and Lys-375. Asp-468 acts as the Proton acceptor in catalysis. Ser-471 is subject to Phosphoserine. Thr-491 is modified (phosphothreonine). Position 494 is a phosphoserine (Ser-494). A Phosphoserine; by PKC modification is found at Ser-499. Position 563 is a symmetric dimethylarginine; by PRMT5 (Arg-563). Phosphoserine is present on Ser-621. Ser-642 carries the post-translational modification Phosphoserine; by MAPK1.

It belongs to the protein kinase superfamily. TKL Ser/Thr protein kinase family. RAF subfamily. As to quaternary structure, monomer. Homodimer. Heterodimerizes with BRAF and this heterodimer possesses a highly increased kinase activity compared to the respective homodimers or monomers. Heterodimerization is mitogen-regulated and enhanced by 14-3-3 proteins. MAPK1/ERK2 activation can induce a negative feedback that promotes the dissociation of the heterodimer. Forms a multiprotein complex with Ras (M-Ras/MRAS), SHOC2 and protein phosphatase 1 (PPP1CA, PPP1CB and PPP1CC). Interacts with LZTR1. Interacts with Ras proteins; the interaction is antagonized by RIN1. Weakly interacts with RIT1. Interacts (via N-terminus) with RGS14 (via RBD domains); the interaction mediates the formation of a ternary complex with BRAF, a ternary complex inhibited by GNAI1. Probably forms a complex composed of chaperones HSP90 and HSP70, co-chaperones CDC37, PPP5C, TSC1 and client protein TSC2, CDK4, AKT, RAF1 and NR3C1; this complex does not contain co-chaperones STIP1/HOP and PTGES3/p23. Interacts with STK3/MST2; the interaction inhibits its pro-apoptotic activity. Interacts (when phosphorylated at Ser-259) with YWHAZ (unphosphorylated at 'Thr-232'). Interacts with MAP2K1/MEK1 and MAP2K2/MEK2. Interacts with MAP3K5/ASF1 (via N-terminus) and this interaction inhibits the proapoptotic function of MAP3K5/ASK1. Interacts with PAK1 (via kinase domain). The phosphorylated form interacts with PIN1. The Ser-338 and Ser-339 phosphorylated form (by PAK1) interacts with BCL2. Interacts with PEBP1/RKIP and this interaction is enhanced if RAF1 is phosphorylated on residues Ser-338, Ser-339, Tyr-340 and Tyr-341. Interacts with ADCY2, ADCY5, ADCY6, DGKH, RCAN1/DSCR1, PPP1R12A, PKB/AKT1, PPP2CA, PPP2R1B, SPRY2, SPRY4, CNKSR1/CNK1, KSR2 and PHB/prohibitin. Interacts with ROCK2. In its active form, interacts with PRMT5. Interacts with FAM83B; displaces 14-3-3 proteins from RAF1 and activates RAF1. Interacts with PDE8A; the interaction promotes RAF1 activity. Interacts with MFHAS1. Interacts with GLS. Interacts with NEK10 and MAP2K1; the interaction is direct with NEK10 and required for ERK1/2-signaling pathway activation in response to UV irradiation. The cofactor is Zn(2+). Phosphorylation at Thr-269, Ser-338, Tyr-341, Thr-491 and Ser-494 results in its activation. Phosphorylation at Ser-29, Ser-43, Ser-289, Ser-296, Ser-301 and Ser-642 by MAPK1/ERK2 results in its inactivation. Phosphorylation at Ser-259 induces the interaction with YWHAZ and inactivates kinase activity. Dephosphorylation of Ser-259 by the SHOC2-MRAS-PP1c (SMP) complex consisting of SHOC2, GTP-bound M-Ras/MRAS and the catalytic subunit of protein phosphatase 1 (PPP1CA, PPP1CB or PPP1CC); this relieves inactivation and stimulates kinase activity. Phosphorylation at Ser-338 by PAK1 and PAK5 and Ser-339 by PAK1 is required for its mitochondrial localization. Phosphorylation at Ser-621 in response to growth factor treatment stabilizes the protein, possibly by preventing proteasomal degradation. Phosphorylation at Ser-289, Ser-296, Ser-301, Ser-338 and Ser-621 are somehow linked to the methylation potential of cells. Treatment of cells with HGF in the presence of the methylation inhibitor 5'-methylthioadenosine (MTA) results in increased phosphorylation at Ser-338 and Ser-621 and decreased phosphorylation at Ser-296, Ser-301 and Ser-338. Dephosphorylation at Ser-338 by PPP5C results in an activity decrease. Post-translationally, methylated at Arg-563 in response to EGF treatment. This modification leads to destabilization of the protein, possibly through proteasomal degradation. In skeletal muscle, isoform 1 is more abundant than isoform 2.

It localises to the cytoplasm. The protein resides in the cell membrane. It is found in the mitochondrion. Its subcellular location is the nucleus. It catalyses the reaction L-seryl-[protein] + ATP = O-phospho-L-seryl-[protein] + ADP + H(+). The enzyme catalyses L-threonyl-[protein] + ATP = O-phospho-L-threonyl-[protein] + ADP + H(+). Its activity is regulated as follows. Regulation is a highly complex process involving membrane recruitment, protein-protein interactions, dimerization, and phosphorylation/dephosphorylation events. Ras-GTP recruits RAF1 to the membrane, thereby promoting its activation. The inactive conformation of RAF1 is maintained by autoinhibitory interactions occurring between the N-terminal regulatory and the C-terminal catalytic domains and by the binding of a 14-3-3 protein that contacts two phosphorylation sites, Ser-259 and Ser-621. Upon mitogenic stimulation, Ras and PPP2R1A cooperate to release autoinhibition and the subsequent phosphorylation of activating sites: Ser-338, Tyr-341, Thr-491, and Ser-494, yields a fully active kinase. Through a negative feedback mechanism involving MAPK1/ERK2, RAF1 is phosphorylated on Ser-29, Ser-43, Ser-289, Ser-296, Ser-301 and Ser-642 by MAPK1/ERK2, which yields an inactive, desensitized kinase. The signaling-competent conformation of RAF1 is finally re-established by the coordinated action of PIN1, a prolyl isomerase that converts pSer and pThr residues from the cis to the trans conformation, which is preferentially recognized and dephosphorylated by PPP2R1A. Activated by homodimerization and heterodimerization (with BRAF). Also regulated through association with other proteins such as KSR2, CNKSR1/CNK1, PEBP1/RKIP, PHB/prohibitin and SPRY4. PEBP1/RKIP acts by dissociating RAF1 from its substrates MAP2K1/MEK1 and MAP2K2/MEK2. PHB/prohibitin facilitates the displacement of 14-3-3 from RAF1 by activated Ras, thereby promoting cell membrane localization and phosphorylation of RAF1 at the activating Ser-338. SPRY4 inhibits Ras-independent, but not Ras-dependent, activation of RAF1. CNKSR1/CNK1 regulates Src-mediated RAF1 activation. Functionally, serine/threonine-protein kinase that acts as a regulatory link between the membrane-associated Ras GTPases and the MAPK/ERK cascade, and this critical regulatory link functions as a switch determining cell fate decisions including proliferation, differentiation, apoptosis, survival and oncogenic transformation. RAF1 activation initiates a mitogen-activated protein kinase (MAPK) cascade that comprises a sequential phosphorylation of the dual-specific MAPK kinases (MAP2K1/MEK1 and MAP2K2/MEK2) and the extracellular signal-regulated kinases (MAPK3/ERK1 and MAPK1/ERK2). The phosphorylated form of RAF1 (on residues Ser-338 and Ser-339, by PAK1) phosphorylates BAD/Bcl2-antagonist of cell death at 'Ser-75'. Phosphorylates adenylyl cyclases: ADCY2, ADCY5 and ADCY6, resulting in their activation. Phosphorylates PPP1R12A resulting in inhibition of the phosphatase activity. Phosphorylates TNNT2/cardiac muscle troponin T. Can promote NF-kB activation and inhibit signal transducers involved in motility (ROCK2), apoptosis (MAP3K5/ASK1 and STK3/MST2), proliferation and angiogenesis (RB1). Can protect cells from apoptosis also by translocating to the mitochondria where it binds BCL2 and displaces BAD/Bcl2-antagonist of cell death. Regulates Rho signaling and migration, and is required for normal wound healing. Plays a role in the oncogenic transformation of epithelial cells via repression of the TJ protein, occludin (OCLN) by inducing the up-regulation of a transcriptional repressor SNAI2/SLUG, which induces down-regulation of OCLN. Restricts caspase activation in response to selected stimuli, notably Fas stimulation, pathogen-mediated macrophage apoptosis, and erythroid differentiation. The polypeptide is RAF proto-oncogene serine/threonine-protein kinase (Homo sapiens (Human)).